The following is a 282-amino-acid chain: Probable phosphatase C1620.13 (282 aa).

Residue H61 is the Tele-phosphohistidine intermediate of the active site. E135 functions as the Proton donor/acceptor in the catalytic mechanism.

This sequence belongs to the phosphoglycerate mutase family. BPG-dependent PGAM subfamily.

The protein localises to the nucleus. This chain is Probable phosphatase C1620.13, found in Schizosaccharomyces pombe (strain 972 / ATCC 24843) (Fission yeast).